A 129-amino-acid chain; its full sequence is Small ribosomal subunit protein uS11 (129 aa).

This sequence belongs to the universal ribosomal protein uS11 family. In terms of assembly, part of the 30S ribosomal subunit. Interacts with proteins S7 and S18. Binds to IF-3.

Functionally, located on the platform of the 30S subunit, it bridges several disparate RNA helices of the 16S rRNA. Forms part of the Shine-Dalgarno cleft in the 70S ribosome. The protein is Small ribosomal subunit protein uS11 of Desulfovibrio desulfuricans (strain ATCC 27774 / DSM 6949 / MB).